A 256-amino-acid chain; its full sequence is Mannose-specific lectin 1 (256 aa).

The signal sequence occupies residues 1–23; it reads MAKLLLFLLPAILGLLVPRSAVA. 2 consecutive Bulb-type lectin domains span residues 26 to 131 and 145 to 252; these read TNYL…PWVR and NNLL…SKRS. Residues 51 to 55, Y59, W63, Q64, 170 to 174, Y178, and 182 to 185 contribute to the beta-D-mannose site; these read QDDCN, QGDCN, and YGWQ. Residues 51-59 carry the Carbohydrate-binding motif 1 motif; sequence QDDCNLVLY. Intrachain disulfides connect C54-C74 and C173-C195. A Carbohydrate-binding motif 2 motif is present at residues 170–178; the sequence is QGDCNLVLY.

Forms heterodimers.

It is found in the secreted. Functionally, mannose-specific lectin. Shows agglutinating activity towards erythrocytes from rabbit. The sequence is that of Mannose-specific lectin 1 from Remusatia vivipara (Hitchhiker elephant ear).